The chain runs to 233 residues: MDAREIIEMIAKAKKKTPIVAYIKGDLAGIDFSSFKFFGDEKFGILFGEYEDFKKLLEEHKEKIEDYHLEVKARNSALPLADITKYKARIEPGAIIRDMVEIGEGAVIMMGAVINVGAVIGEGTMIDMNAVIGGRAIIGKKCHIGAGAVIAGVIEPPSAKPVVIEDEVVVGANAVILEGVTVGKGAVVAAGAVVTKDVPPYTVVAGVPARVIKQIDERTKEKTKIVDELRNLE.

It belongs to the transferase hexapeptide repeat family. DapH subfamily.

It carries out the reaction (S)-2,3,4,5-tetrahydrodipicolinate + acetyl-CoA + H2O = L-2-acetamido-6-oxoheptanedioate + CoA. The protein operates within amino-acid biosynthesis; L-lysine biosynthesis via DAP pathway; LL-2,6-diaminopimelate from (S)-tetrahydrodipicolinate (acetylase route): step 1/3. In terms of biological role, catalyzes the transfer of an acetyl group from acetyl-CoA to tetrahydrodipicolinate. The sequence is that of 2,3,4,5-tetrahydropyridine-2,6-dicarboxylate N-acetyltransferase from Thermotoga petrophila (strain ATCC BAA-488 / DSM 13995 / JCM 10881 / RKU-1).